A 274-amino-acid chain; its full sequence is Phosphatidylglycerol--prolipoprotein diacylglyceryl transferase (274 aa).

4 helical membrane-spanning segments follow: residues 24-44 (WYAL…RFLS), 60-80 (LLVW…VVFY), 96-116 (WHGG…TVLF), and 122-142 (LSVA…LFFG). Arg-143 serves as a coordination point for a 1,2-diacyl-sn-glycero-3-phospho-(1'-sn-glycerol). Transmembrane regions (helical) follow at residues 182 to 202 (ATLE…FTAL), 207 to 227 (GQII…AEFF), and 241 to 261 (VTMG…VFVV).

Belongs to the Lgt family.

The protein localises to the cell inner membrane. It carries out the reaction L-cysteinyl-[prolipoprotein] + a 1,2-diacyl-sn-glycero-3-phospho-(1'-sn-glycerol) = an S-1,2-diacyl-sn-glyceryl-L-cysteinyl-[prolipoprotein] + sn-glycerol 1-phosphate + H(+). The protein operates within protein modification; lipoprotein biosynthesis (diacylglyceryl transfer). Catalyzes the transfer of the diacylglyceryl group from phosphatidylglycerol to the sulfhydryl group of the N-terminal cysteine of a prolipoprotein, the first step in the formation of mature lipoproteins. The polypeptide is Phosphatidylglycerol--prolipoprotein diacylglyceryl transferase (Rhodospirillum rubrum (strain ATCC 11170 / ATH 1.1.1 / DSM 467 / LMG 4362 / NCIMB 8255 / S1)).